A 119-amino-acid polypeptide reads, in one-letter code: NADH-quinone oxidoreductase subunit A (119 aa).

Helical transmembrane passes span 7–27 (FPVL…MSIG), 63–83 (LIAI…PWGV), and 88–108 (IGWP…VGFV).

Belongs to the complex I subunit 3 family. In terms of assembly, NDH-1 is composed of 14 different subunits. Subunits NuoA, H, J, K, L, M, N constitute the membrane sector of the complex.

It localises to the cell inner membrane. It catalyses the reaction a quinone + NADH + 5 H(+)(in) = a quinol + NAD(+) + 4 H(+)(out). Functionally, NDH-1 shuttles electrons from NADH, via FMN and iron-sulfur (Fe-S) centers, to quinones in the respiratory chain. The immediate electron acceptor for the enzyme in this species is believed to be ubiquinone. Couples the redox reaction to proton translocation (for every two electrons transferred, four hydrogen ions are translocated across the cytoplasmic membrane), and thus conserves the redox energy in a proton gradient. The protein is NADH-quinone oxidoreductase subunit A of Cupriavidus pinatubonensis (strain JMP 134 / LMG 1197) (Cupriavidus necator (strain JMP 134)).